Consider the following 399-residue polypeptide: Formaldehyde dismutase (399 aa).

Cys46 is a Zn(2+) binding site. Residue 47–51 (GSDQH) coordinates NAD(+). Zn(2+) is bound by residues His67, Cys97, Cys100, Cys103, Cys111, and Asp170. Residue Thr174 coordinates NAD(+). Residue His177 participates in Zn(2+) binding. NAD(+)-binding positions include 197 to 198 (PV), 218 to 219 (DQ), Arg223, Val263, His268, Pro299, 299 to 301 (PGI), and 336 to 338 (GMA).

The protein belongs to the zinc-containing alcohol dehydrogenase family. In terms of assembly, homotetramer. Requires Zn(2+) as cofactor. The cofactor is NAD(+). It depends on NADH as a cofactor.

The enzyme catalyses 2 formaldehyde + H2O = methanol + formate + H(+). Inhibited by the substrate analog pyrazole but not by NAD analogs such as AMP, ADP, ATP or N-methylnicotinamide chloride. Functionally, active against a range of primary alcohols as well as some secondary alcohols. Exhibits higher activity against alcohols with longer carbon chains. The sequence is that of Formaldehyde dismutase from Pseudomonas putida (Arthrobacter siderocapsulatus).